Here is a 396-residue protein sequence, read N- to C-terminus: Serine/threonine-protein kinase VRK1 (396 aa).

Residues 37–317 (WKVGLPIGQG…LLDYTEKPLY (281 aa)) form the Protein kinase domain. Residues 43 to 51 (IGQGGFGCI) and lysine 71 contribute to the ATP site. A Glycyl lysine isopeptide (Lys-Gly) (interchain with G-Cter in SUMO2) cross-link involves residue lysine 71. Aspartate 177 serves as the catalytic Proton acceptor. Serine 342 carries the phosphoserine; by PLK3 modification. A disordered region spans residues 354–396 (ITKKRKKEIEESKEPGVEDTEWSNTQTEEAIQTRSRTRKRVQK). Threonine 355 bears the Phosphothreonine; by autocatalysis mark. A compositionally biased stretch (basic and acidic residues) spans 360 to 369 (KEIEESKEPG). Residues 375–387 (WSNTQTEEAIQTR) are compositionally biased toward polar residues. Serine 376 is modified (phosphoserine). Threonine 378 bears the Phosphothreonine mark. The interval 387–393 (RSRTRKR) is required for interaction with the nucleosome.

This sequence belongs to the protein kinase superfamily. CK1 Ser/Thr protein kinase family. VRK subfamily. As to quaternary structure, interacts with HDAC1, KAT2B, SETDB1, KDM3A and KDM4A. Associates with the nucleosome through interactions with nucleosome DNA, histone H2A and histone H2B; the interaction with H2A and H2B is mediated by the nucleosome acidic patch, a cluster of negatively charged residues of H2A and H2B forming a cleft within the nucleosome core. In terms of assembly, (Microbial infection) Interacts with vaccinia protein B12; this interaction inhibits the repressive activity of the vaccinia virus B12 pseudokinase on viral replication factory formation. In terms of processing, autophosphorylated at various serine and threonine residues. Autophosphorylation does not impair its ability to phosphorylate p53/TP53. Phosphorylation by PLK3 leads to induction of Golgi fragmentation during mitosis. In terms of tissue distribution, widely expressed. Highly expressed in fetal liver, testis and thymus.

It localises to the nucleus. It is found in the cytoplasm. The protein resides in the cajal body. It catalyses the reaction L-seryl-[protein] + ATP = O-phospho-L-seryl-[protein] + ADP + H(+). The catalysed reaction is L-threonyl-[protein] + ATP = O-phospho-L-threonyl-[protein] + ADP + H(+). Active in presence of Mn(2+), Mg(2+) and Zn(2+), but is not functional with Ca(2+) or Cu(2+). Has a higher affinity for Mn(2+) than for Mg(2+). RAN inhibits its autophosphorylation and its ability to phosphorylate histone H3. In terms of biological role, serine/threonine kinase involved in the regulation of key cellular processes including the cell cycle, nuclear condensation, transcription regulation, and DNA damage response. Controls chromatin organization and remodeling by mediating phosphorylation of histone H3 on 'Thr-4' and histone H2AX (H2aXT4ph). It also phosphorylates KAT5 in response to DNA damage, promoting KAT5 association with chromatin and histone acetyltransferase activity. Is involved in the regulation of cell cycle progression of neural progenitors, and is required for proper cortical neuronal migration. Is involved in neurite elongation and branching in motor neurons, and has an essential role in Cajal bodies assembly, acting through COIL phosphorylation and the control of coilin degradation. Involved in Golgi disassembly during the cell cycle: following phosphorylation by PLK3 during mitosis, it is required to induce Golgi fragmentation. Phosphorylates BANF1: disrupts its ability to bind DNA, reduces its binding to LEM domain-containing proteins and causes its relocalization from the nucleus to the cytoplasm. Phosphorylates TP53BP1 and p53/TP53 on 'Thr-18', preventing the interaction between p53/TP53 and MDM2. Phosphorylates ATF2 which activates its transcriptional activity. Phosphorylates JUN. The chain is Serine/threonine-protein kinase VRK1 from Homo sapiens (Human).